A 264-amino-acid chain; its full sequence is SPRY domain-containing SOCS box protein 2 (264 aa).

Polar residues predominate over residues 1–18 (MGQTALARGSSSTPSSHA). The tract at residues 1-53 (MGQTALARGSSSTPSSHALYSDLSPPEGLEELLSAPPPDLGAQRHHGWNPKDC) is disordered. The segment covering 21–34 (SDLSPPEGLEELLS) has biased composition (low complexity). One can recognise a B30.2/SPRY domain in the interval 26–221 (PEGLEELLSA…VRIRYLGERR (196 aa)). The SOCS box domain maps to 222 to 264 (AEEPQSLLHLSRLCVRHALGDTRLGQISSLPLPPAMKRYLLYK).

The protein belongs to the SPSB family. As to quaternary structure, component of the probable ECS(SPSB2) E3 ubiquitin-protein ligase complex which contains CUL5, RNF7/RBX2, Elongin BC complex and SPSB2. Interacts with CUL5, RNF7, ELOB and ELOC. Interacts with MET. Interacts (via B30.2/SPRY domain) with PAWR; this interaction occurs in association with the Elongin BC complex. Interacts with NOS2.

The protein resides in the cytoplasm. Its subcellular location is the cytosol. Its pathway is protein modification; protein ubiquitination. Substrate recognition component of a SCF-like ECS (Elongin BC-CUL2/5-SOCS-box protein) E3 ubiquitin-protein ligase complex which mediates the ubiquitination and subsequent proteasomal degradation of target proteins. Negatively regulates nitric oxide (NO) production and limits cellular toxicity in activated macrophages by mediating the ubiquitination and proteasomal degradation of NOS2. Acts as a bridge which links NOS2 with the ECS E3 ubiquitin ligase complex components ELOC and CUL5. The sequence is that of SPRY domain-containing SOCS box protein 2 (Spsb2) from Rattus norvegicus (Rat).